A 329-amino-acid polypeptide reads, in one-letter code: GTP 3',8-cyclase (329 aa).

In terms of domain architecture, Radical SAM core spans 8-234 (AFARKFYYLR…QLRQRSDGPA (227 aa)). A GTP-binding site is contributed by Arg17. 2 residues coordinate [4Fe-4S] cluster: Cys24 and Cys28. Position 30 (Tyr30) interacts with S-adenosyl-L-methionine. Position 31 (Cys31) interacts with [4Fe-4S] cluster. Arg68 is a GTP binding site. Gly72 lines the S-adenosyl-L-methionine pocket. Residue Thr99 participates in GTP binding. Residue Ser123 participates in S-adenosyl-L-methionine binding. Position 160 (Lys160) interacts with GTP. Met194 is an S-adenosyl-L-methionine binding site. Positions 257 and 260 each coordinate [4Fe-4S] cluster. 262–264 (RLR) provides a ligand contact to GTP. A [4Fe-4S] cluster-binding site is contributed by Cys274.

This sequence belongs to the radical SAM superfamily. MoaA family. Monomer and homodimer. The cofactor is [4Fe-4S] cluster.

The enzyme catalyses GTP + AH2 + S-adenosyl-L-methionine = (8S)-3',8-cyclo-7,8-dihydroguanosine 5'-triphosphate + 5'-deoxyadenosine + L-methionine + A + H(+). It participates in cofactor biosynthesis; molybdopterin biosynthesis. Catalyzes the cyclization of GTP to (8S)-3',8-cyclo-7,8-dihydroguanosine 5'-triphosphate. This chain is GTP 3',8-cyclase, found in Escherichia coli O45:K1 (strain S88 / ExPEC).